Reading from the N-terminus, the 136-residue chain is Large ribosomal subunit protein uL16c (136 aa).

Residues Met-1–Met-17 show a composition bias toward basic residues. A disordered region spans residues Met-1–Asn-25.

It belongs to the universal ribosomal protein uL16 family. In terms of assembly, part of the 50S ribosomal subunit.

The protein localises to the plastid. It is found in the chloroplast. The sequence is that of Large ribosomal subunit protein uL16c from Anthoceros angustus (Hornwort).